We begin with the raw amino-acid sequence, 443 residues long: Glucose-6-phosphate isomerase (443 aa).

E285 serves as the catalytic Proton donor. Residues H306 and K420 contribute to the active site.

The protein belongs to the GPI family.

The protein resides in the cytoplasm. It carries out the reaction alpha-D-glucose 6-phosphate = beta-D-fructose 6-phosphate. Its pathway is carbohydrate biosynthesis; gluconeogenesis. The protein operates within carbohydrate degradation; glycolysis; D-glyceraldehyde 3-phosphate and glycerone phosphate from D-glucose: step 2/4. Functionally, catalyzes the reversible isomerization of glucose-6-phosphate to fructose-6-phosphate. In Staphylococcus saprophyticus subsp. saprophyticus (strain ATCC 15305 / DSM 20229 / NCIMB 8711 / NCTC 7292 / S-41), this protein is Glucose-6-phosphate isomerase.